Here is an 89-residue protein sequence, read N- to C-terminus: Cell division topological specificity factor (89 aa).

The protein belongs to the MinE family.

Its function is as follows. Prevents the cell division inhibition by proteins MinC and MinD at internal division sites while permitting inhibition at polar sites. This ensures cell division at the proper site by restricting the formation of a division septum at the midpoint of the long axis of the cell. The polypeptide is Cell division topological specificity factor (Paracoccus denitrificans (strain Pd 1222)).